The primary structure comprises 152 residues: Protein X (152 aa).

The segment at 68 to 115 (PCALRFTSATWRCMETPMNSVTCLRKRTLGLRTAPPTVMEQYIKDCLF) is mitochondrial targeting sequence.

This sequence belongs to the orthohepadnavirus protein X family. In terms of assembly, may form homodimer. May interact with host CEBPA, CFLAR, CREB1, DDB1, E4F1, HBXIP, HSPD1/HSP60, NFKBIA, POLR2E and SMAD4. Interacts with host SMC5-SMC6 complex and induces its degradation. Interacts with host TRPC4AP; leading to prevent ubiquitination of TRPC4AP. Interacts with host PLSCR1; this interaction promotes ubiquitination and degradation of HBx and impairs HBx-mediated cell proliferation. In terms of processing, a fraction may be phosphorylated in insect cells and HepG2 cells, a human hepatoblastoma cell line. Phosphorylated in vitro by host protein kinase C or mitogen-activated protein kinase. N-acetylated in insect cells.

Its subcellular location is the host cytoplasm. The protein resides in the host nucleus. It is found in the host mitochondrion. Multifunctional protein that plays a role in silencing host antiviral defenses and promoting viral transcription. Does not seem to be essential for HBV infection. May be directly involved in development of cirrhosis and liver cancer (hepatocellular carcinoma). Most of cytosolic activities involve modulation of cytosolic calcium. The effect on apoptosis is controversial depending on the cell types in which the studies have been conducted. May induce apoptosis by localizing in mitochondria and causing loss of mitochondrial membrane potential. May also modulate apoptosis by binding host CFLAR, a key regulator of the death-inducing signaling complex (DISC). Promotes viral transcription by using the host E3 ubiquitin ligase DDB1 to target the SMC5-SMC6 complex to proteasomal degradation. This host complex would otherwise bind to viral episomal DNA, and prevents its transcription. Moderately stimulates transcription of many different viral and cellular transcription elements. Promoters and enhancers stimulated by HBx contain DNA binding sites for NF-kappa-B, AP-1, AP-2, c-EBP, ATF/CREB, or the calcium-activated factor NF-AT. The sequence is that of Protein X from Lagothrix lagotricha (Brown woolly monkey).